A 186-amino-acid chain; its full sequence is ATP synthase subunit b (186 aa).

The helical transmembrane segment at 28-48 threads the bilayer; sequence IVWSIIPFAVILFVFWKFVLP.

Belongs to the ATPase B chain family. In terms of assembly, F-type ATPases have 2 components, F(1) - the catalytic core - and F(0) - the membrane proton channel. F(1) has five subunits: alpha(3), beta(3), gamma(1), delta(1), epsilon(1). F(0) has three main subunits: a(1), b(2) and c(10-14). The alpha and beta chains form an alternating ring which encloses part of the gamma chain. F(1) is attached to F(0) by a central stalk formed by the gamma and epsilon chains, while a peripheral stalk is formed by the delta and b chains.

It localises to the cell membrane. In terms of biological role, f(1)F(0) ATP synthase produces ATP from ADP in the presence of a proton or sodium gradient. F-type ATPases consist of two structural domains, F(1) containing the extramembraneous catalytic core and F(0) containing the membrane proton channel, linked together by a central stalk and a peripheral stalk. During catalysis, ATP synthesis in the catalytic domain of F(1) is coupled via a rotary mechanism of the central stalk subunits to proton translocation. Its function is as follows. Component of the F(0) channel, it forms part of the peripheral stalk, linking F(1) to F(0). The polypeptide is ATP synthase subunit b (Corynebacterium jeikeium (strain K411)).